The primary structure comprises 417 residues: UDP-N-acetylglucosamine 1-carboxyvinyltransferase (417 aa).

22-23 (KN) contributes to the phosphoenolpyruvate binding site. Residue arginine 93 participates in UDP-N-acetyl-alpha-D-glucosamine binding. Residue cysteine 117 is the Proton donor of the active site. Cysteine 117 is subject to 2-(S-cysteinyl)pyruvic acid O-phosphothioketal. UDP-N-acetyl-alpha-D-glucosamine contacts are provided by residues 122 to 126 (RPVDQ), aspartate 304, and isoleucine 326.

This sequence belongs to the EPSP synthase family. MurA subfamily.

The protein localises to the cytoplasm. It carries out the reaction phosphoenolpyruvate + UDP-N-acetyl-alpha-D-glucosamine = UDP-N-acetyl-3-O-(1-carboxyvinyl)-alpha-D-glucosamine + phosphate. The protein operates within cell wall biogenesis; peptidoglycan biosynthesis. Functionally, cell wall formation. Adds enolpyruvyl to UDP-N-acetylglucosamine. The chain is UDP-N-acetylglucosamine 1-carboxyvinyltransferase from Neisseria meningitidis serogroup B (strain ATCC BAA-335 / MC58).